Reading from the N-terminus, the 911-residue chain is Valine--tRNA ligase (911 aa).

The 'HIGH' region motif lies at 57-67 (PTVSGSLHVGH). Positions 599–603 (KMSKS) match the 'KMSKS' region motif. Residue K602 participates in ATP binding. The segment at 882-911 (EESAAEDAPETEVAVEASELGEPPAKKPKH) is disordered.

The protein belongs to the class-I aminoacyl-tRNA synthetase family. ValS type 2 subfamily. Monomer.

The protein localises to the cytoplasm. It catalyses the reaction tRNA(Val) + L-valine + ATP = L-valyl-tRNA(Val) + AMP + diphosphate. In terms of biological role, catalyzes the attachment of valine to tRNA(Val). As ValRS can inadvertently accommodate and process structurally similar amino acids such as threonine, to avoid such errors, it has a 'posttransfer' editing activity that hydrolyzes mischarged Thr-tRNA(Val) in a tRNA-dependent manner. The polypeptide is Valine--tRNA ligase (Bifidobacterium longum (strain DJO10A)).